The sequence spans 45 residues: Alpha-conotoxin-like Lp1.10 (45 aa).

A propeptide spanning residues 1-27 (VVLGPASDGRNAAANVKAPDLIALTVR) is cleaved from the precursor. 2 disulfides stabilise this stretch: C30–C36 and C31–C44. The interval 32-34 (HNA) is lacks the Ser-Xaa-Pro motif that is crucial for potent interaction with nAChR. C44 bears the Cysteine amide mark.

It belongs to the conotoxin A superfamily. In terms of tissue distribution, expressed by the venom duct.

It localises to the secreted. Functionally, alpha-conotoxins act on postsynaptic membranes, they bind to the nicotinic acetylcholine receptors (nAChR) and thus inhibit them. Has possibly a distinct nAChR binding mode from other alpha-conotoxins, due to a different three residue motif (lacks the Ser-Xaa-Pro motif). This Conus leopardus (Leopard cone) protein is Alpha-conotoxin-like Lp1.10.